The following is a 204-amino-acid chain: Holliday junction branch migration complex subunit RuvA (204 aa).

The domain I stretch occupies residues 1–64 (MISRMKGIIL…EDAQLLYGFH (64 aa)). The interval 65–143 (HPKERAMFSE…NLNKNLFKST (79 aa)) is domain II. A flexible linker region spans residues 144 to 155 (ADHMLSSVSTDL). The interval 156-204 (SAKSAEAEAISALISLGYKPQEAAQLIKNIAQPDLDSQALIKHALRSTL) is domain III.

Belongs to the RuvA family. Homotetramer. Forms an RuvA(8)-RuvB(12)-Holliday junction (HJ) complex. HJ DNA is sandwiched between 2 RuvA tetramers; dsDNA enters through RuvA and exits via RuvB. An RuvB hexamer assembles on each DNA strand where it exits the tetramer. Each RuvB hexamer is contacted by two RuvA subunits (via domain III) on 2 adjacent RuvB subunits; this complex drives branch migration. In the full resolvosome a probable DNA-RuvA(4)-RuvB(12)-RuvC(2) complex forms which resolves the HJ.

The protein resides in the cytoplasm. Its function is as follows. The RuvA-RuvB-RuvC complex processes Holliday junction (HJ) DNA during genetic recombination and DNA repair, while the RuvA-RuvB complex plays an important role in the rescue of blocked DNA replication forks via replication fork reversal (RFR). RuvA specifically binds to HJ cruciform DNA, conferring on it an open structure. The RuvB hexamer acts as an ATP-dependent pump, pulling dsDNA into and through the RuvAB complex. HJ branch migration allows RuvC to scan DNA until it finds its consensus sequence, where it cleaves and resolves the cruciform DNA. In Hamiltonella defensa subsp. Acyrthosiphon pisum (strain 5AT), this protein is Holliday junction branch migration complex subunit RuvA.